Consider the following 473-residue polypeptide: Fumarate hydratase class II (473 aa).

Residues 104–106 (SGT), 128–131 (HPND), 138–140 (SSN), and threonine 186 each bind substrate. Residue histidine 187 is the Proton donor/acceptor of the active site. Serine 318 is an active-site residue. Substrate contacts are provided by residues serine 319 and 324 to 326 (KVN).

It belongs to the class-II fumarase/aspartase family. Fumarase subfamily. Homotetramer.

It is found in the cytoplasm. It carries out the reaction (S)-malate = fumarate + H2O. It functions in the pathway carbohydrate metabolism; tricarboxylic acid cycle; (S)-malate from fumarate: step 1/1. Involved in the TCA cycle. Catalyzes the stereospecific interconversion of fumarate to L-malate. The polypeptide is Fumarate hydratase class II (Corynebacterium efficiens (strain DSM 44549 / YS-314 / AJ 12310 / JCM 11189 / NBRC 100395)).